The chain runs to 287 residues: Coatomer subunit epsilon-1 (287 aa).

Belongs to the COPE family. Oligomeric complex that consists of at least the alpha, beta, beta', gamma, delta, epsilon and zeta subunits.

It localises to the cytoplasm. The protein localises to the golgi apparatus membrane. It is found in the cytoplasmic vesicle. The protein resides in the COPI-coated vesicle membrane. Functionally, the coatomer is a cytosolic protein complex that binds to dilysine motifs and reversibly associates with Golgi non-clathrin-coated vesicles, which further mediate biosynthetic protein transport from the ER, via the Golgi up to the trans Golgi network. The coatomer complex is required for budding from Golgi membranes, and is essential for the retrograde Golgi-to-ER transport of dilysine-tagged proteins. This is Coatomer subunit epsilon-1 (COPE1) from Oryza sativa subsp. japonica (Rice).